The sequence spans 1062 residues: Roc-COR-CHAT protease (1062 aa).

8 LRR repeats span residues 70–94 (LAGL…HLQQ), 95–116 (LRLL…GSMP), 115–141 (MPLL…ALQK), 142–159 (LDVS…SACP), 160–180 (ALWW…MPAG), 181–203 (FKAL…NGKL), 204–226 (PKLV…LLLP), and 228–249 (GLET…IRGS). The COR domain occupies 470–660 (DWLGVMEELQ…GLMWKDNVVF (191 aa)). Residues 836–856 (ERDNDHTGLSDSSDQEDETFT) are disordered. Catalysis depends on residues His931 and Cys980.

In terms of biological role, a dedicated protease for substrate gasdermin bGSDM; cleaves the bGSDM precursor, releasing the pore-forming moiety, which integrates into the membrane and triggers cell death. Probably involved in defense against bacteriophages. Expression of bGSDM and this neighboring protease is highly toxic in E.coli. In Unknown prokaryotic organism, this protein is Roc-COR-CHAT protease.